The following is a 219-amino-acid chain: Vesicle-associated membrane protein 721 (219 aa).

At 1–196 (MAQQSLIYSF…MWLQNMKIKL (196 aa)) the chain is on the cytoplasmic side. A Longin domain is found at 10–114 (FVARGTVILV…SLNKEFGSKL (105 aa)). The region spanning 130–190 (KLAKVKAQVS…TQMRRKMWLQ (61 aa)) is the v-SNARE coiled-coil homology domain. The helical; Anchor for type IV membrane protein transmembrane segment at 197-217 (IVLAIIIALILIIVLSVCHGF) threads the bilayer. The Vesicular segment spans residues 218-219 (KC).

Belongs to the synaptobrevin family. In terms of tissue distribution, expressed in flowers, leaves, stems and roots.

Its subcellular location is the cell membrane. It localises to the early endosome membrane. Its function is as follows. Involved in the targeting and/or fusion of transport vesicles to their target membrane. The sequence is that of Vesicle-associated membrane protein 721 from Arabidopsis thaliana (Mouse-ear cress).